We begin with the raw amino-acid sequence, 242 residues long: Ribonuclease PH (242 aa).

Phosphate contacts are provided by residues arginine 86 and glycine 124–arginine 126.

It belongs to the RNase PH family. In terms of assembly, homohexameric ring arranged as a trimer of dimers.

It carries out the reaction tRNA(n+1) + phosphate = tRNA(n) + a ribonucleoside 5'-diphosphate. In terms of biological role, phosphorolytic 3'-5' exoribonuclease that plays an important role in tRNA 3'-end maturation. Removes nucleotide residues following the 3'-CCA terminus of tRNAs; can also add nucleotides to the ends of RNA molecules by using nucleoside diphosphates as substrates, but this may not be physiologically important. Probably plays a role in initiation of 16S rRNA degradation (leading to ribosome degradation) during starvation. This chain is Ribonuclease PH, found in Bacillus pumilus (strain SAFR-032).